Here is a 445-residue protein sequence, read N- to C-terminus: Adenylosuccinate synthetase (445 aa).

Residues 24 to 30 (GDEGKGK) and 52 to 54 (GHT) contribute to the GTP site. Asp-25 acts as the Proton acceptor in catalysis. Asp-25 and Gly-52 together coordinate Mg(2+). Residues 25–28 (DEGK), 50–53 (NAGH), Thr-147, Arg-161, Asn-238, Thr-253, and Arg-317 each bind IMP. The active-site Proton donor is the His-53. 313-319 (TTTGRRR) contributes to the substrate binding site. Residues Arg-319, 345–347 (KLD), and 427–429 (GVG) contribute to the GTP site.

The protein belongs to the adenylosuccinate synthetase family. In terms of assembly, homodimer. Requires Mg(2+) as cofactor.

The protein resides in the cytoplasm. The catalysed reaction is IMP + L-aspartate + GTP = N(6)-(1,2-dicarboxyethyl)-AMP + GDP + phosphate + 2 H(+). The protein operates within purine metabolism; AMP biosynthesis via de novo pathway; AMP from IMP: step 1/2. Plays an important role in the de novo pathway and in the salvage pathway of purine nucleotide biosynthesis. Catalyzes the first committed step in the biosynthesis of AMP from IMP. The sequence is that of Adenylosuccinate synthetase from Malassezia globosa (strain ATCC MYA-4612 / CBS 7966) (Dandruff-associated fungus).